Reading from the N-terminus, the 155-residue chain is MMLPDWKIRKEILIEPFSEESLQPAGYDLRVGGEAYVNGKILDVKDSGGVTIPPKTYALVLTLERIKLPDDVMGDMKLRSSLAREGLIGSFAWVDPGWDGNLTLALFNASNESVELKYGERFVQIAFIRLEGPAKNPYRGNYQGSKHLALSKRKR.

DCTP-binding positions include 79–84 (RSSLAR), Asp95, Gln124, and Tyr138.

This sequence belongs to the dCTP deaminase family. In terms of assembly, homotrimer.

The enzyme catalyses dCTP + H2O + H(+) = dUTP + NH4(+). The protein operates within pyrimidine metabolism; dUMP biosynthesis; dUMP from dCTP (dUTP route): step 1/2. Its function is as follows. Catalyzes the deamination of dCTP to dUTP. In Thermococcus kodakarensis (strain ATCC BAA-918 / JCM 12380 / KOD1) (Pyrococcus kodakaraensis (strain KOD1)), this protein is dCTP deaminase.